We begin with the raw amino-acid sequence, 273 residues long: MKKYLLGIGLILALIACKQNVSSLDEKNSVSVDLPGEMNVLVSKEKNKDGKYDLIATVDKLELKGTSDKNNGSGVLEGVKADKSKVKLTISDDLGQTTLEVFKEDGKTLVSKKVTSKDKSSTEEKFNEKGEVSEKIITRADGTRLEYTEIKSDGSGKAKEVLKGYVLEGTLTAEKTTLVVKEGTVTLSKNISKSGEVSVELNDTDSSAATKKTAAWNSGTSTLTITVNSKKTKDLVFTKENTITVQQYDSNGTKLEGSAVEITKLDEIKNALK.

The first 16 residues, 1–16, serve as a signal peptide directing secretion; that stretch reads MKKYLLGIGLILALIA. Residue cysteine 17 is the site of N-palmitoyl cysteine attachment. Cysteine 17 is lipidated: S-diacylglycerol cysteine.

It belongs to the OspA lipoprotein family.

The protein resides in the cell outer membrane. Its subcellular location is the cell surface. The sequence is that of Outer surface protein A from Borreliella burgdorferi (strain N40) (Borrelia burgdorferi).